We begin with the raw amino-acid sequence, 255 residues long: Geranylgeranylglyceryl phosphate synthase (255 aa).

Mg(2+) is bound by residues D26 and S55. Residues 174 to 180, 205 to 206, and 227 to 228 contribute to the sn-glycerol 1-phosphate site; these read YLEAGSG, GG, and GT.

The protein belongs to the GGGP/HepGP synthase family. Group II subfamily. It depends on Mg(2+) as a cofactor.

The protein localises to the cytoplasm. It catalyses the reaction sn-glycerol 1-phosphate + (2E,6E,10E)-geranylgeranyl diphosphate = sn-3-O-(geranylgeranyl)glycerol 1-phosphate + diphosphate. It participates in membrane lipid metabolism; glycerophospholipid metabolism. Prenyltransferase that catalyzes the transfer of the geranylgeranyl moiety of geranylgeranyl diphosphate (GGPP) to the C3 hydroxyl of sn-glycerol-1-phosphate (G1P). This reaction is the first ether-bond-formation step in the biosynthesis of archaeal membrane lipids. The polypeptide is Geranylgeranylglyceryl phosphate synthase (Thermococcus sibiricus (strain DSM 12597 / MM 739)).